The following is a 520-amino-acid chain: Non-specific phospholipase C6 (520 aa).

Residues 1-31 form the signal peptide; it reads MKPSSASRFSLTFSHFLTLYCLLTQTHVAQG.

This sequence belongs to the bacterial phospholipase C family. In terms of tissue distribution, expressed in roots, leaves, stems, flowers and siliques.

The protein resides in the secreted. The sequence is that of Non-specific phospholipase C6 (NPC6) from Arabidopsis thaliana (Mouse-ear cress).